We begin with the raw amino-acid sequence, 427 residues long: Transcobalamin-2 (427 aa).

Positions 1-18 (MRHLGAFLFLLGVLGALT) are cleaved as a signal peptide. 4 disulfides stabilise this stretch: C21–C267, C83–C96, C116–C309, and C165–C205. Cob(II)alamin-binding positions include Q104, 152–156 (TSYYQ), H190, 190–194 (HHSVD), N242, S245, Q291, and 395–397 (WQL).

This sequence belongs to the eukaryotic cobalamin transport proteins family. As to quaternary structure, interacts with CD320 (via LDL-receptor class A domains).

Its subcellular location is the secreted. Functionally, primary vitamin B12-binding and transport protein. Delivers cobalamin to cells. In Homo sapiens (Human), this protein is Transcobalamin-2 (TCN2).